A 416-amino-acid polypeptide reads, in one-letter code: Leu/Ile/Val-binding protein homolog 4 (416 aa).

Positions 1–26 (MSLKVFLQAGVACAALSLAGAAGASA) are cleaved as a signal peptide.

Belongs to the leucine-binding protein family.

In terms of biological role, component of an amino-acid transport system. The chain is Leu/Ile/Val-binding protein homolog 4 from Brucella melitensis biotype 1 (strain ATCC 23456 / CCUG 17765 / NCTC 10094 / 16M).